Here is a 166-residue protein sequence, read N- to C-terminus: Spiderine-1b (166 aa).

The first 18 residues, 1-18 (MKFALVLLGICAFYLVNA), serve as a signal peptide directing secretion. Positions 19–58 (TGDLETELEASELQELQEALDLIGETSLESLEAEELEEAR) are cleaved as a propeptide — removed in mature form. Residues 59–99 (KFKWGKLFSAAKKLYKKGKKLSKNKNFKKALKFGKQLAKNL) are linear cationic cytotoxin domain. Residues 113-166 (NNKCWAIGTTCSDDCDCCPEHHCHCPAGKWLPGLFRCTCQVTESDKVNKCPPAE) form the Oxytoxin-type inhibitor cystine knot (ICK) domain. 5 cysteine pairs are disulfide-bonded: cysteine 116–cysteine 130, cysteine 123–cysteine 135, cysteine 127–cysteine 162, cysteine 129–cysteine 151, and cysteine 137–cysteine 149.

The protein belongs to the spiderine family. Cationic/spiderine subfamily. As to expression, expressed by the venom gland.

It is found in the secreted. In terms of biological role, has antimicrobial, insecticidal, cytolytic and cytotoxic activity. The chain is Spiderine-1b from Oxyopes takobius (Lynx spider).